The primary structure comprises 547 residues: Sodium-coupled neutral amino acid transporter 4 (547 aa).

The segment at 1–30 (MDPMELRNVNIEPDDESSSGESAPDSYIGI) is disordered. Topologically, residues 1–104 (MDPMELRNVN…GLSYAMANTG (104 aa)) are extracellular. Ser49 carries the post-translational modification Phosphoserine. Residues 105–125 (IILFIIMLLAVAILSLYSVHL) form a helical membrane-spanning segment. Over 126 to 151 (LLKTAKEGGSLIYEKLGEKAFGWPGK) the chain is Cytoplasmic. The chain crosses the membrane as a helical span at residues 152–172 (IGAFVSITMQNIGAMSSYLFI). The Extracellular portion of the chain corresponds to 173 to 195 (IKYELPEVIRAFMGLEENTGEWY). A helical transmembrane segment spans residues 196 to 216 (LNGNYLIIFVSVGIILPLSLL). Residues 217 to 220 (KNLG) are Cytoplasmic-facing. Residues 221-241 (YLGYTSGFSLTCMVFFVSVVI) form a helical membrane-spanning segment. The Extracellular segment spans residues 242–332 (YKKFQIPCPL…PKYFVFNSRT (91 aa)). Residues Cys249 and Cys321 are joined by a disulfide bond. N-linked (GlcNAc...) asparagine glycosylation is found at Asn260, Asn264, and Asn276. The chain crosses the membrane as a helical span at residues 333–353 (AYAIPILVFAFVCHPEVLPIY). Over 354–369 (SELKDRSRRKMQTVSN) the chain is Cytoplasmic. The chain crosses the membrane as a helical span at residues 370 to 390 (ISITGMLVMYLLAALFGYLTF). At 391 to 411 (YGEVEDELLHAYSKVYTLDIP) the chain is on the extracellular side. The chain crosses the membrane as a helical span at residues 412 to 432 (LLMVRLAVLVAVTLTVPIVLF). At 433-453 (PIRTSVITLLFPKRPFSWIRH) the chain is on the cytoplasmic side. A helical membrane pass occupies residues 454–474 (FLIAAVLIALNNVLVILVPTI). The Extracellular segment spans residues 475 to 476 (KY). A helical transmembrane segment spans residues 477–497 (IFGFIGASSATMLIFILPAVF). Over 498-514 (YLKLVKKETFRSPQKVG) the chain is Cytoplasmic. Residues 515-535 (ALIFLVVGIFFMIGSMALIII) traverse the membrane as a helical segment. The Extracellular segment spans residues 536 to 547 (DWIYDPPNSKHH).

It belongs to the amino acid/polyamine transporter 2 family. The disulfide bond plays an important role in substrate transport, but has no effect on trafficking to the cell surface. Expressed almost exclusively in embryonic and adult liver, and at lower levels in the kidney. Expressed at lower levels in adult muscle and pancreas. Detected in fetal blood vessels. Expressed in syncytiotrophoblas of placenta during first trimester and at term. Highly expressed in first trimester placenta compared to term placenta.

The protein localises to the cell membrane. Its subcellular location is the cell projection. The protein resides in the microvillus membrane. It catalyses the reaction L-methionine(in) + Na(+)(in) = L-methionine(out) + Na(+)(out). The catalysed reaction is L-asparagine(in) + Na(+)(in) = L-asparagine(out) + Na(+)(out). The enzyme catalyses L-threonine(in) + Na(+)(in) = L-threonine(out) + Na(+)(out). It carries out the reaction L-serine(in) + Na(+)(in) = L-serine(out) + Na(+)(out). It catalyses the reaction glycine(in) + Na(+)(in) = glycine(out) + Na(+)(out). The catalysed reaction is L-alanine(in) + Na(+)(in) = L-alanine(out) + Na(+)(out). The enzyme catalyses L-glutamine(in) + Na(+)(in) = L-glutamine(out) + Na(+)(out). It carries out the reaction L-histidine(in) + Na(+)(in) = L-histidine(out) + Na(+)(out). It catalyses the reaction L-cysteine(in) + Na(+)(in) = L-cysteine(out) + Na(+)(out). The catalysed reaction is L-proline(in) + Na(+)(in) = L-proline(out) + Na(+)(out). In terms of biological role, symporter that cotransports neutral amino acids and sodium ions from the extraccellular to the intracellular side of the cell membrane. The transport is electrogenic, pH dependent and partially tolerates substitution of Na(+) by Li(+). Preferentially transports smaller amino acids, such as glycine, L-alanine, L-serine, L-asparagine and L-threonine, followed by L-cysteine, L-histidine, L-proline and L-glutamine and L-methionine. The protein is Sodium-coupled neutral amino acid transporter 4 of Homo sapiens (Human).